The sequence spans 233 residues: MAKLSKKQVSARAAFAGKSNLAVEEAVKLVKENASAKFDETVEIAMNLGVDPRHADQMVRGVVTLPNGTGKDVRVAVFARGPKADEAKAAGAEIVGAEDLMETIQSGKIEFDRCIATPDMMPLVGRLGKILGPRNLMPNPKVGTVTMDVKAAVEAAKGGEVQFKAEKAGVVHAGVGKASFEIEKLAENIRAFVDAVNRAKPSGAKGTYVKKVSISSTMGPGVSLDLGSTAAAQ.

Belongs to the universal ribosomal protein uL1 family. In terms of assembly, part of the 50S ribosomal subunit.

Its function is as follows. Binds directly to 23S rRNA. The L1 stalk is quite mobile in the ribosome, and is involved in E site tRNA release. Functionally, protein L1 is also a translational repressor protein, it controls the translation of the L11 operon by binding to its mRNA. The sequence is that of Large ribosomal subunit protein uL1 from Paracoccus denitrificans (strain Pd 1222).